Reading from the N-terminus, the 197-residue chain is Cerebellin-3 (197 aa).

The signal sequence occupies residues 1–24; it reads MGTEWHKPKLSLALVLLTLEAGWA. One can recognise a C1q domain in the interval 59–197; that stretch reads APPGRVAFAA…SFSGFLIFPL (139 aa). The interval 64–197 is necessary for interaction with CBLN3, and homotrimerization; the sequence is VAFAAVRSHH…SFSGFLIFPL (134 aa). Asn82 carries an N-linked (GlcNAc...) asparagine glycan.

As to quaternary structure, heterohexamer; disulfide-linked heterotrimers. Interacts with CBLN1. May also form oligomers with CBLN2 and CBLN4. Expressed in brain, restricted to the cerebellar cortex. Within the cerebellum, expressed in granule layers (at protein level). Also detected in postsynaptic Purkinje cell spines (at protein level).

Its subcellular location is the endoplasmic reticulum. The protein localises to the golgi apparatus. It is found in the cis-Golgi network. It localises to the secreted. The protein resides in the synapse. In terms of biological role, may be involved in synaptic functions in the CNS. In Mus musculus (Mouse), this protein is Cerebellin-3 (Cbln3).